The following is a 413-amino-acid chain: Multifunctional CCA protein (413 aa).

Residues Gly8 and Arg11 each coordinate ATP. Residues Gly8 and Arg11 each contribute to the CTP site. Asp21 and Asp23 together coordinate Mg(2+). ATP contacts are provided by Arg91, Arg143, and Arg146. 3 residues coordinate CTP: Arg91, Arg143, and Arg146. Residues 232–333 enclose the HD domain; that stretch reads TGVHVMMVVD…VRFFERSDAL (102 aa).

This sequence belongs to the tRNA nucleotidyltransferase/poly(A) polymerase family. Bacterial CCA-adding enzyme type 1 subfamily. As to quaternary structure, monomer. Can also form homodimers and oligomers. Requires Mg(2+) as cofactor. Ni(2+) is required as a cofactor.

The enzyme catalyses a tRNA precursor + 2 CTP + ATP = a tRNA with a 3' CCA end + 3 diphosphate. The catalysed reaction is a tRNA with a 3' CCA end + 2 CTP + ATP = a tRNA with a 3' CCACCA end + 3 diphosphate. Its function is as follows. Catalyzes the addition and repair of the essential 3'-terminal CCA sequence in tRNAs without using a nucleic acid template. Adds these three nucleotides in the order of C, C, and A to the tRNA nucleotide-73, using CTP and ATP as substrates and producing inorganic pyrophosphate. tRNA 3'-terminal CCA addition is required both for tRNA processing and repair. Also involved in tRNA surveillance by mediating tandem CCA addition to generate a CCACCA at the 3' terminus of unstable tRNAs. While stable tRNAs receive only 3'-terminal CCA, unstable tRNAs are marked with CCACCA and rapidly degraded. This Burkholderia ambifaria (strain MC40-6) protein is Multifunctional CCA protein.